A 313-amino-acid polypeptide reads, in one-letter code: Dimethyladenosine transferase (313 aa).

A disordered region spans residues 1–22 (MPKIKSAASGRRRERQQQRGQL). Residues histidine 37, leucine 39, glycine 64, glutamate 85, aspartate 113, and asparagine 128 each contribute to the S-adenosyl-L-methionine site.

This sequence belongs to the class I-like SAM-binding methyltransferase superfamily. rRNA adenine N(6)-methyltransferase family. In terms of assembly, part of the small subunit (SSU) processome, composed of more than 70 proteins and the RNA chaperone small nucleolar RNA (snoRNA) U3.

The protein resides in the nucleus. It localises to the nucleoplasm. The protein localises to the nucleolus. It catalyses the reaction adenosine(1779)/adenosine(1780) in 18S rRNA + 4 S-adenosyl-L-methionine = N(6)-dimethyladenosine(1779)/N(6)-dimethyladenosine(1780) in 18S rRNA + 4 S-adenosyl-L-homocysteine + 4 H(+). In terms of biological role, specifically dimethylates two adjacent adenosines in the loop of a conserved hairpin near the 3'-end of 18S rRNA in the 40S particle. Involved in the pre-rRNA processing steps leading to small-subunit rRNA production independently of its RNA-modifying catalytic activity. Part of the small subunit (SSU) processome, first precursor of the small eukaryotic ribosomal subunit. During the assembly of the SSU processome in the nucleolus, many ribosome biogenesis factors, an RNA chaperone and ribosomal proteins associate with the nascent pre-rRNA and work in concert to generate RNA folding, modifications, rearrangements and cleavage as well as targeted degradation of pre-ribosomal RNA by the RNA exosome. The polypeptide is Dimethyladenosine transferase (DIMT1) (Bos taurus (Bovine)).